We begin with the raw amino-acid sequence, 24 residues long: Ascaphin-3 (24 aa).

In terms of tissue distribution, expressed by the skin glands.

It is found in the secreted. In terms of biological role, antimicrobial peptide that shows higher potency against Gram-negative bacteria than against Gram-positive bacteria. Has a very week hemolytic activity. The sequence is that of Ascaphin-3 from Ascaphus truei (Coastal tailed frog).